Consider the following 204-residue polypeptide: Histone chaperone ASF1A (204 aa).

The interaction with histone H3, CHAF1B, and HIRA stretch occupies residues 1-156; the sequence is MAKVQVNNVV…TRFHINWEDN (156 aa). A Required for interaction with HIRA motif is present at residues 31–37; the sequence is IEDLSED. Residues 155 to 204 are required for interaction with HIRA; the sequence is DNTEKLEDAESSNPNLPSLLSTDALPSASKGWSTSENSLNVMLESHMDCM. Residue S192 is modified to Phosphoserine; by TLK2.

This sequence belongs to the ASF1 family. As to quaternary structure, interacts with histone H3 (via C-terminus), including histone H3.1, H3.2 and H3.3, and histone H4; the interaction with H3 is direct. Probably interacts with the heterodimeric form of H3-H4 taking the place of the second dimer. Interacts with the CHAF1A, CHAF1B and RBBP4 subunits of the CAF-1 complex. Interacts with CABIN1, HAT1, HIRA, NASP, TAF1 and UBN1. Found in a soluble complex with NASP and histones H3 and H4; the interaction with NASP is probably indirect and mediated by H3-H4. Interacts with CDAN1. Found in a cytosolic complex with IPO4 and histones H3 and H4. Interacts with CREBBP. In terms of processing, phosphorylated by TLK1 and TLK2. Highly phosphorylated in S-phase and at lower levels in M-phase. TLK2-mediated phosphorylation at Ser-192 prevents proteasome-dependent degradation.

Its subcellular location is the nucleus. Histone chaperone that facilitates histone deposition and histone exchange and removal during nucleosome assembly and disassembly. Cooperates with chromatin assembly factor 1 (CAF-1) to promote replication-dependent chromatin assembly and with HIRA to promote replication-independent chromatin assembly. Promotes homologous recombination-mediated repair of double-strand breaks (DSBs) at stalled or collapsed replication forks: acts by mediating histone replacement at DSBs, leading to recruitment of the MMS22L-TONSL complex and subsequent loading of RAD51. Also involved in the nuclear import of the histone H3-H4 dimer together with importin-4 (IPO4): specifically recognizes and binds newly synthesized histones with the monomethylation of H3 'Lys-9' and acetylation at 'Lys-14' (H3K9me1K14ac) marks, and diacetylation at 'Lys-5' and 'Lys-12' of H4 (H4K5K12ac) marks in the cytosol. Required for the formation of senescence-associated heterochromatin foci (SAHF) and efficient senescence-associated cell cycle exit. This Bos taurus (Bovine) protein is Histone chaperone ASF1A (ASF1A).